The sequence spans 207 residues: MAALVEPLGLERDVSRAVELLERLQRSGELPPQKLQALQRVLQSRFCSAIREVYEQLYDTLDITGSAEVRAHATAKATVAAFTASEGHAHPRVVELPKTDEGLGFNIMGGKEQNSPIYISRVIPGGVADRHGGLKRGDQLLSVNGVSVEGEHHEKAVELLKAAQGSVKLVVRYTPRVLEEMEARFEKMRSARRRQQHHSYSSLESRG.

The Kinase interacting site motif lies at 1-13; it reads MAALVEPLGLERD. Residues 10 to 65 enclose the L27 domain; that stretch reads LERDVSRAVELLERLQRSGELPPQKLQALQRVLQSRFCSAIREVYEQLYDTLDITG. One can recognise a PDZ domain in the interval 93–175; that stretch reads VVELPKTDEG…SVKLVVRYTP (83 aa). The disordered stretch occupies residues 187 to 207; the sequence is KMRSARRRQQHHSYSSLESRG. Over residues 198-207 the composition is skewed to polar residues; it reads HSYSSLESRG.

This sequence belongs to the lin-7 family. In terms of assembly, forms two exclusive ternary complexes with CASK and CASKIN1. The brain-specific heterotrimeric complex (LIN-10-LIN-2-LIN-7 complex) composed of at least APBA1, CASK, and LIN7, associates with the motor protein KIF17 to transport vesicles along microtubules. Forms a heterotrimeric complex composed of MMP5, LIN7B and PATJ; the N-terminal L27 domain of PALS1 interacts with the L27 domain of PATJ and the C-terminal L27 domain of PALS1 interacts with the L27 domain of LIN7B. Forms a heterotrimeric complex with DLG1 and CASK via their L27 domains. Interacts with DLG4 and GRIN2B as well as CDH1 and CTNNB1, the channels KCNJ12/Kir2.2, KCNJ4/Kir2.3 and probably KCNJ2/Kir2.1 and SLC6A12/BGT-1 via its PDZ domain. The association of LIN7A with cadherin and beta-catenin is calcium-dependent, occurs at synaptic junctions and requires the actin cytoskeleton. Interacts with EGFR, ERBB2, ERBB3 and ERBB4 with both PDZ and KID domains. Associates with KIF17 via APBA1. Interacts with ASIC3. Interacts with TOPK. Interacts with RTKN. Interacts with APBA1. Interacts with MPP7. Interacts with DLG2. Interacts with DLG3. As to expression, expressed only in brain.

The protein localises to the cell membrane. The protein resides in the basolateral cell membrane. It localises to the cell junction. It is found in the postsynaptic density membrane. Its subcellular location is the tight junction. Plays a role in establishing and maintaining the asymmetric distribution of channels and receptors at the plasma membrane of polarized cells. Forms membrane-associated multiprotein complexes that may regulate delivery and recycling of proteins to the correct membrane domains. The tripartite complex composed of LIN7 (LIN7A, LIN7B or LIN7C), CASK and APBA1 associates with the motor protein KIF17 to transport vesicles containing N-methyl-D-aspartate (NMDA) receptor subunit NR2B along microtubules. This complex may have the potential to couple synaptic vesicle exocytosis to cell adhesion in brain. Ensures the proper localization of GRIN2B (subunit 2B of the NMDA receptor) to neuronal postsynaptic density and may function in localizing synaptic vesicles at synapses where it is recruited by beta-catenin and cadherin. Required to localize Kir2 channels, GABA transporter (SLC6A12) and EGFR/ERBB1, ERBB2, ERBB3 and ERBB4 to the basolateral membrane of epithelial cells. May increase the amplitude of ASIC3 acid-evoked currents by stabilizing the channel at the cell surface. In Rattus norvegicus (Rat), this protein is Protein lin-7 homolog B (Lin7b).